The chain runs to 281 residues: Probable thioesterase gloN (281 aa).

A disordered region spans residues 207-233 (LDDGSNNSRDLNETSPTETSNDSETQA). Positions 210–232 (GSNNSRDLNETSPTETSNDSETQ) are enriched in polar residues.

This sequence belongs to the AMT4 thioesterase family.

The protein operates within mycotoxin biosynthesis. In terms of biological role, probable thioesterase; part of the gene cluster that mediates the biosynthesis of pneumocandins, lipohexapeptides of the echinocandin family that prevent fungal cell wall formation by non-competitive inhibition of beta-1,3-glucan synthase. The 10,12-dimethylmyristoyl side chain is synthesized by the reducing polyketide synthase gloL/GLPKS4. The thioesterase gloN/GLHYD exclusively interacts with gloL/GLPKS4 to maintain turnover of the polyketide side chain. The 10R,12S-dimethylmyristic acid is then transferred to the first thiolation domain of the nonribosomal peptide synthetase gloA/GLNRPS4 by the acyl-AMP ligase gloD/GLligase, followed by its acylation to L-ornithine to trigger elongation of the cyclic hexapeptide. L-ornithine, 4R-hydroxyl-L-proline (generated from L-proline by the dioxygenase gloF/GLOXY2), 3S-hydroxyl-L-homotyrosine (generated by gloG/GLHtyB, gloH/GLHtyA, gloI/GLHtyC, gloJ/GLHtyD and hydroxylated at C-3 by the dioxygenase gloM/GLOXY1), 3R-hydroxyl-L-glutamine (generated from L-glutamine probably by the dioxygenase gloE/GLOXY3) and 3S-hydroxyl-L-proline (generated from L-proline by the dioxygenase gloF/GLOXY2 to yield pneumocandin B0), or 3S-hydroxyl-4S-methyl-L-proline (generated from L-leucine by the dioxygenase gloC/GLOXY4 to yield pneumocandin A0) are sequentially added to the growing chain. The last C domain of gloA/GLNRPS4 is proposed to be responsible for cyclization by condensation to form the peptide bond between L-ornithine and 3S-hydroxyl-4S-methyl-L-proline (for pneumocandin A0) or 3S-hydroxyl-L-proline (for pneumocandin B0). Finally, the subsequent C-4 hydroxylation of 3S-hydroxyl-L-homotyrosine and L-ornithine dihydroxylation at C-4 and C-5 are performed by the cytochrome P450 monooxygenases gloP/GLP450-1 and gloO/GLP450-2, respectively. The protein is Probable thioesterase gloN of Glarea lozoyensis (strain ATCC 20868 / MF5171).